Consider the following 367-residue polypeptide: Phosphoribosylaminoimidazole-succinocarboxamide synthase (367 aa).

Belongs to the SAICAR synthetase family.

It catalyses the reaction 5-amino-1-(5-phospho-D-ribosyl)imidazole-4-carboxylate + L-aspartate + ATP = (2S)-2-[5-amino-1-(5-phospho-beta-D-ribosyl)imidazole-4-carboxamido]succinate + ADP + phosphate + 2 H(+). The protein operates within purine metabolism; IMP biosynthesis via de novo pathway; 5-amino-1-(5-phospho-D-ribosyl)imidazole-4-carboxamide from 5-amino-1-(5-phospho-D-ribosyl)imidazole-4-carboxylate: step 1/2. The chain is Phosphoribosylaminoimidazole-succinocarboxamide synthase from Shewanella sp. (strain MR-7).